Reading from the N-terminus, the 288-residue chain is ATP synthase gamma chain (288 aa).

It belongs to the ATPase gamma chain family. F-type ATPases have 2 components, CF(1) - the catalytic core - and CF(0) - the membrane proton channel. CF(1) has five subunits: alpha(3), beta(3), gamma(1), delta(1), epsilon(1). CF(0) has three main subunits: a, b and c.

Its subcellular location is the cell membrane. Produces ATP from ADP in the presence of a proton gradient across the membrane. The gamma chain is believed to be important in regulating ATPase activity and the flow of protons through the CF(0) complex. In Macrococcus caseolyticus (strain JCSC5402) (Macrococcoides caseolyticum), this protein is ATP synthase gamma chain.